Consider the following 576-residue polypeptide: G protein-coupled receptor kinase 6 (576 aa).

Residues 1-185 are N-terminal; it reads MELENIVANT…LERQPVTKNT (185 aa). The 119-residue stretch at 53–171 folds into the RGS domain; it reads YHSLCERQPI…LDSIYFNRFL (119 aa). The Protein kinase domain maps to 186-448; the sequence is FRQYRVLGKG…AREVKEHPLF (263 aa). ATP contacts are provided by residues 192–200, Lys215, and 264–270; these read LGKGGFGEV and TLMNGGD. The active-site Proton acceptor is the Asp311. 315 to 318 contacts ATP; that stretch reads ENIL. The AGC-kinase C-terminal domain maps to 449 to 514; it reads KKLNFKRLGA…GSVSIPWQNE (66 aa). Residue Ser484 is modified to Phosphoserine. Thr485 bears the Phosphothreonine mark. Residues Cys561, Cys562, and Cys565 are each lipidated (S-palmitoyl cysteine). 2 positions are modified to phosphoserine: Ser566 and Ser568.

Belongs to the protein kinase superfamily. AGC Ser/Thr protein kinase family. GPRK subfamily. In terms of assembly, interacts with GIT1. As to expression, expressed in the brain in striatal neurons.

The protein resides in the membrane. The catalysed reaction is [G-protein-coupled receptor] + ATP = [G-protein-coupled receptor]-phosphate + ADP + H(+). Specifically phosphorylates the activated forms of G protein-coupled receptors. Such receptor phosphorylation initiates beta-arrestin-mediated receptor desensitization, internalization, and signaling events leading to their desensitization. Seems to be involved in the desensitization of D2-like dopamine receptors in striatum and chemokine receptor CXCR4 which is critical for CXCL12-induced cell chemotaxis. Phosphorylates rhodopsin (RHO) (in vitro) and a non G-protein-coupled receptor, LRP6 during Wnt signaling (in vitro). In Mus musculus (Mouse), this protein is G protein-coupled receptor kinase 6 (Grk6).